The following is a 134-amino-acid chain: Profilin-2 (134 aa).

Cys-13 and Cys-118 are joined by a disulfide. An Involved in PIP2 interaction motif is present at residues 84-100; it reads AVIRGKKGSGGITIKKT. Thr-114 carries the phosphothreonine modification.

This sequence belongs to the profilin family. As to quaternary structure, occurs in many kinds of cells as a complex with monomeric actin in a 1:1 ratio. Post-translationally, phosphorylated by MAP kinases.

Its subcellular location is the cytoplasm. The protein resides in the cytoskeleton. Functionally, binds to actin and affects the structure of the cytoskeleton. At high concentrations, profilin prevents the polymerization of actin, whereas it enhances it at low concentrations. The polypeptide is Profilin-2 (Olea europaea (Common olive)).